The following is a 152-amino-acid chain: Protein-export protein SecB (152 aa).

The protein belongs to the SecB family. In terms of assembly, homotetramer, a dimer of dimers. One homotetramer interacts with 1 SecA dimer.

The protein resides in the cytoplasm. In terms of biological role, one of the proteins required for the normal export of preproteins out of the cell cytoplasm. It is a molecular chaperone that binds to a subset of precursor proteins, maintaining them in a translocation-competent state. It also specifically binds to its receptor SecA. In Rickettsia rickettsii (strain Iowa), this protein is Protein-export protein SecB.